The sequence spans 110 residues: Insulin (110 aa).

The first 24 residues, 1–24, serve as a signal peptide directing secretion; it reads MALWMRLLPLLALLALWGPDPVPA. 3 disulfide bridges follow: cysteine 31-cysteine 96, cysteine 43-cysteine 109, and cysteine 95-cysteine 100. The propeptide at 57-87 is c peptide; it reads EAEDPQVGQVELGGGPGAGSLQPLALEGSLQ.

It belongs to the insulin family. In terms of assembly, heterodimer of a B chain and an A chain linked by two disulfide bonds.

It localises to the secreted. Functionally, insulin decreases blood glucose concentration. It increases cell permeability to monosaccharides, amino acids and fatty acids. It accelerates glycolysis, the pentose phosphate cycle, and glycogen synthesis in liver. This chain is Insulin (INS), found in Chlorocebus aethiops (Green monkey).